We begin with the raw amino-acid sequence, 835 residues long: Microcephalin (835 aa).

Residues 1 to 93 (MAAPILKDVV…AHIDESLFPA (93 aa)) enclose the BRCT 1 domain. Phosphoserine is present on residues S279, S287, S296, and S333. Disordered regions lie at residues 332–376 (LSPT…RKRS) and 417–442 (SPDN…PAQF). T335 is modified (phosphothreonine). Basic residues predominate over residues 343–361 (LLIHSRPRSSSVKRKRVSH). The residue at position 548 (S548) is a Phosphoserine. The interval 555 to 583 (AVDLKSTQNKGTTSKISNSSEGEAQSEHE) is disordered. The segment covering 559–577 (KSTQNKGTTSKISNSSEGE) has biased composition (polar residues). BRCT domains are found at residues 640–730 (SGRG…PFEL) and 751–833 (YRGT…NYLL).

As to quaternary structure, interacts with CDC27 and maybe other components of the APC/C complex. Interacts with histone variant H2AX under DNA damage conditions.

It is found in the cytoplasm. The protein localises to the cytoskeleton. It localises to the microtubule organizing center. Its subcellular location is the centrosome. In terms of biological role, implicated in chromosome condensation and DNA damage induced cellular responses. May play a role in neurogenesis and regulation of the size of the cerebral cortex. This is Microcephalin from Pan troglodytes (Chimpanzee).